The sequence spans 116 residues: NADH-ubiquinone oxidoreductase chain 3 (116 aa).

Transmembrane regions (helical) follow at residues 3–23, 56–76, and 87–107; these read LIMT…TVSF, FFLV…LLPL, and GTFF…IYEW.

The protein belongs to the complex I subunit 3 family.

Its subcellular location is the mitochondrion membrane. The catalysed reaction is a ubiquinone + NADH + 5 H(+)(in) = a ubiquinol + NAD(+) + 4 H(+)(out). In terms of biological role, core subunit of the mitochondrial membrane respiratory chain NADH dehydrogenase (Complex I) that is believed to belong to the minimal assembly required for catalysis. Complex I functions in the transfer of electrons from NADH to the respiratory chain. The immediate electron acceptor for the enzyme is believed to be ubiquinone. This chain is NADH-ubiquinone oxidoreductase chain 3 (MT-ND3), found in Carassius auratus (Goldfish).